We begin with the raw amino-acid sequence, 358 residues long: 3-isopropylmalate dehydrogenase 2 (358 aa).

Residue 74 to 87 (GPKWDKLPAESRPE) coordinates NAD(+). The substrate site is built by Arg-94, Arg-104, Arg-132, and Asp-221. Residues Asp-221, Asp-245, and Asp-249 each contribute to the Mg(2+) site. 279–291 (GSAPDIAGQGVAN) is a binding site for NAD(+).

Belongs to the isocitrate and isopropylmalate dehydrogenases family. LeuB type 1 subfamily. As to quaternary structure, homodimer. The cofactor is Mg(2+). Mn(2+) serves as cofactor.

It is found in the cytoplasm. The enzyme catalyses (2R,3S)-3-isopropylmalate + NAD(+) = 4-methyl-2-oxopentanoate + CO2 + NADH. It participates in amino-acid biosynthesis; L-leucine biosynthesis; L-leucine from 3-methyl-2-oxobutanoate: step 3/4. Catalyzes the oxidation of 3-carboxy-2-hydroxy-4-methylpentanoate (3-isopropylmalate) to 3-carboxy-4-methyl-2-oxopentanoate. The product decarboxylates to 4-methyl-2 oxopentanoate. In Dechloromonas aromatica (strain RCB), this protein is 3-isopropylmalate dehydrogenase 2.